Here is a 442-residue protein sequence, read N- to C-terminus: Endothelin receptor type B (442 aa).

A signal peptide spans 1–26 (MQSSASRCGRALVALLLACGLLGVWG). At 27–101 (EKRGFPPAQA…RKIEINKTFK (75 aa)) the chain is on the extracellular side. Residues Asn-60 and Asn-97 are each glycosylated (N-linked (GlcNAc...) asparagine). The helical transmembrane segment at 102-126 (YINTIVSCLVFVLGIIGNSTLLRII) threads the bilayer. The Cytoplasmic segment spans residues 127 to 137 (YKNKCMRNGPN). Residues 138 to 163 (ILIASLALGDLLHIIIDIPINAYKLL) form a helical membrane-spanning segment. Residues 164–175 (AGDWPFGAEMCK) are Extracellular-facing. Cys-174 and Cys-255 are disulfide-bonded. Residues 176–197 (LVPFIQKASVGITVLSLCALSI) traverse the membrane as a helical segment. Residues 198 to 218 (DRYRAVASWSRIKGIGVPKWT) are Cytoplasmic-facing. The chain crosses the membrane as a helical span at residues 219–243 (AVEIVLIWVVSVVLAVPEAIGFDVI). The Extracellular segment spans residues 244–271 (TSDYKGKPLRVCMLNPFQKTAFMQFYKT). A helical transmembrane segment spans residues 272–296 (AKDWWLFSFYFCLPLAITAIFYTLM). Topologically, residues 297–324 (TCEMLRKKSGMQIALNDHLKQRREVAKT) are cytoplasmic. Position 305 is a phosphoserine (Ser-305). Residues 325-350 (VFCLVLVFALCWLPLHLSRILKLTLY) traverse the membrane as a helical segment. The Extracellular segment spans residues 351–362 (DQSNPQRCELLS). Residues 363 to 389 (FLLVLDYIGINMASLNSCINPIALYLV) traverse the membrane as a helical segment. At 390–442 (SKRFKNCFKSCLCCWCQTFEEKQSLEEKQSCLKFKANDHGYDNFRSSNKYSSS) the chain is on the cytoplasmic side. Residues Cys-402, Cys-403, and Cys-405 are each lipidated (S-palmitoyl cysteine). At Ser-419 the chain carries Phosphoserine. Tyr-439 is subject to Phosphotyrosine. Ser-440, Ser-441, and Ser-442 each carry phosphoserine.

This sequence belongs to the G-protein coupled receptor 1 family. Endothelin receptor subfamily. EDNRB sub-subfamily. Widely distributed in cell types of a variety of tissues.

The protein resides in the cell membrane. In terms of biological role, non-specific receptor for endothelin 1, 2, and 3. Mediates its action by association with G proteins that activate a phosphatidylinositol-calcium second messenger system. This chain is Endothelin receptor type B, found in Rattus norvegicus (Rat).